We begin with the raw amino-acid sequence, 223 residues long: Expansin-B6 (223 aa).

The Expansin-like EG45 domain maps to 16–124 (GGACGFAVAN…RRVECLYRRT (109 aa)). 3 cysteine pairs are disulfide-bonded: Cys19/Cys46, Cys49/Cys119, and Cys54/Cys60. The region spanning 137–218 (YYISFVVEYE…NWKPNETYRS (82 aa)) is the Expansin-like CBD domain. Residue Asn213 is glycosylated (N-linked (GlcNAc...) asparagine).

The protein belongs to the expansin family. Expansin B subfamily.

Its subcellular location is the secreted. The protein localises to the cell wall. It is found in the membrane. In terms of biological role, may cause loosening and extension of plant cell walls by disrupting non-covalent bonding between cellulose microfibrils and matrix glucans. The protein is Expansin-B6 of Arabidopsis thaliana (Mouse-ear cress).